We begin with the raw amino-acid sequence, 264 residues long: 3-methyl-2-oxobutanoate hydroxymethyltransferase (264 aa).

Residues Asp-45 and Asp-84 each contribute to the Mg(2+) site. Residues 45–46 (DS), Asp-84, and Lys-112 each bind 3-methyl-2-oxobutanoate. Glu-114 contributes to the Mg(2+) binding site. Residue Glu-181 is the Proton acceptor of the active site.

It belongs to the PanB family. In terms of assembly, homodecamer; pentamer of dimers. The cofactor is Mg(2+).

It is found in the cytoplasm. The catalysed reaction is 3-methyl-2-oxobutanoate + (6R)-5,10-methylene-5,6,7,8-tetrahydrofolate + H2O = 2-dehydropantoate + (6S)-5,6,7,8-tetrahydrofolate. Its pathway is cofactor biosynthesis; (R)-pantothenate biosynthesis; (R)-pantoate from 3-methyl-2-oxobutanoate: step 1/2. In terms of biological role, catalyzes the reversible reaction in which hydroxymethyl group from 5,10-methylenetetrahydrofolate is transferred onto alpha-ketoisovalerate to form ketopantoate. This is 3-methyl-2-oxobutanoate hydroxymethyltransferase from Alteromonas mediterranea (strain DSM 17117 / CIP 110805 / LMG 28347 / Deep ecotype).